We begin with the raw amino-acid sequence, 340 residues long: NAD-dependent epimerase/dehydratase terH (340 aa).

The chain crosses the membrane as a helical span at residues 7-27 (IVPPGGLVLVTGVTGFIGSYI). N-linked (GlcNAc...) asparagine glycosylation occurs at Asn139. Residue Tyr176 participates in NADP(+) binding.

This sequence belongs to the NAD(P)-dependent epimerase/dehydratase family. Dihydroflavonol-4-reductase subfamily.

Its subcellular location is the membrane. In terms of biological role, NAD-dependent epimerase/dehydratase; part of the gene cluster that mediates the biosynthesis of terrein, a fungal metabolite with ecological, antimicrobial, antiproliferative, and antioxidative activities. The first step in the pathway is performed by the polyketide synthase terA that produces 4-hydroxy-6-methylpyranon (4-HMP), orsellinic acid (OA), and 2,3-dehydro-6-hydroxymellein (2,3-dehydro-6-HM) by condensing acetyl-CoA with two, three, or four malonyl-CoA units, respectively. 4-HMP and OA are not pathway intermediates, but are rather shunt or side products. 2,3-dehydro-6-HM is further converted to 6-hydroxymellein (6-HM) by the 6-hydroxymellein synthase terB. The monooxygenases terC and terD, the multicopper oxidase terE and the Kelch-like protein terF are then involved in the transformation of 6-HM to terrein. Even if they are co-regulated with the other terrein cluster genes, terH and terI seem to be dispensable for terrein production; whereas one or both of the 2 transporters terG and terJ are probably required for efficient secretion of metabolites. The polypeptide is NAD-dependent epimerase/dehydratase terH (Aspergillus terreus (strain NIH 2624 / FGSC A1156)).